The following is a 270-amino-acid chain: MGDTAEDQDDRAMMEAEGVTSFSELLMFSDGVLSSSSDHQPEGNVGDGGEDSLGFVFSGKTGSRMLCFSGGYQNDDESLFLEPSVPTSGVSDLDPSCIKIDCRNSNDACTVDKSTKSSTKKRTGTGNGQESDQNRKPGKKGKRNQEKSSVGIAKVRKERLGERIAALQQLVSPYGKTDAASVLHEAMGYIKFLQDQIQVLCSPYLINHSLDGGVVTGDVMAAMKAKDLRSRGLCLVPVSSTVHVENSNGADFWSPATMGHTTSPSLPQGF.

The segment at 109–153 is disordered; the sequence is CTVDKSTKSSTKKRTGTGNGQESDQNRKPGKKGKRNQEKSSVGIA. A bHLH domain is found at 144–193; that stretch reads NQEKSSVGIAKVRKERLGERIAALQQLVSPYGKTDAASVLHEAMGYIKFL.

As to quaternary structure, homodimer.

It is found in the nucleus. The sequence is that of Transcription factor bHLH113 (BHLH113) from Arabidopsis thaliana (Mouse-ear cress).